The chain runs to 153 residues: 3-hydroxyacyl-[acyl-carrier-protein] dehydratase FabZ (153 aa).

Residue His-57 is part of the active site.

Belongs to the thioester dehydratase family. FabZ subfamily.

The protein resides in the cytoplasm. It carries out the reaction a (3R)-hydroxyacyl-[ACP] = a (2E)-enoyl-[ACP] + H2O. Involved in unsaturated fatty acids biosynthesis. Catalyzes the dehydration of short chain beta-hydroxyacyl-ACPs and long chain saturated and unsaturated beta-hydroxyacyl-ACPs. The sequence is that of 3-hydroxyacyl-[acyl-carrier-protein] dehydratase FabZ from Aeromonas hydrophila subsp. hydrophila (strain ATCC 7966 / DSM 30187 / BCRC 13018 / CCUG 14551 / JCM 1027 / KCTC 2358 / NCIMB 9240 / NCTC 8049).